The following is a 483-amino-acid chain: Glutamyl-tRNA(Gln) amidotransferase subunit A (483 aa).

Active-site charge relay system residues include Lys-75 and Ser-150. Catalysis depends on Ser-174, which acts as the Acyl-ester intermediate.

The protein belongs to the amidase family. GatA subfamily. As to quaternary structure, heterotrimer of A, B and C subunits.

It catalyses the reaction L-glutamyl-tRNA(Gln) + L-glutamine + ATP + H2O = L-glutaminyl-tRNA(Gln) + L-glutamate + ADP + phosphate + H(+). Its function is as follows. Allows the formation of correctly charged Gln-tRNA(Gln) through the transamidation of misacylated Glu-tRNA(Gln) in organisms which lack glutaminyl-tRNA synthetase. The reaction takes place in the presence of glutamine and ATP through an activated gamma-phospho-Glu-tRNA(Gln). The protein is Glutamyl-tRNA(Gln) amidotransferase subunit A of Legionella pneumophila (strain Corby).